The following is a 492-amino-acid chain: Linolenate hydroperoxide lyase, chloroplastic (492 aa).

Residues 1–33 (MLLRTMAATSPRPPPSTSLTSQQPPSPPSQLPL) form a disordered region. Residues 1 to 34 (MLLRTMAATSPRPPPSTSLTSQQPPSPPSQLPLR) constitute a chloroplast transit peptide. A heme-binding site is contributed by Cys454.

The protein belongs to the cytochrome P450 family. Heme is required as a cofactor. Expressed in roots, leaves, flowers and siliques.

The protein resides in the plastid. Its subcellular location is the chloroplast. Its function is as follows. Catalyzes the conversion of (9Z,11E,15Z)-(13S)-hydroperoxyoctadeca-9,11,15-trienoate to (9Z)-12-oxo-dodec-9-enoate and cis-3-hexenal. Possesses low activity toward (9Z,11E)-(13S)-13-hydroperoxyoctadeca-9,11-dienoate. Required for the synthesis of the green leaf volatiles (GLVs) hexanal and trans-2-hexenal. The protein is Linolenate hydroperoxide lyase, chloroplastic of Arabidopsis thaliana (Mouse-ear cress).